The primary structure comprises 152 residues: Orientotoxin-1 (152 aa).

As to expression, expressed by the venom gland.

The protein localises to the secreted. The catalysed reaction is a 1-acyl-sn-glycero-3-phosphocholine + H2O = sn-glycerol 3-phosphocholine + a fatty acid + H(+). Neurotoxin of presynaptic effect which degrades lysophospholipids. This Vespa orientalis (Oriental hornet) protein is Orientotoxin-1.